Consider the following 54-residue polypeptide: UPF0391 membrane protein Sde_0270 (54 aa).

The next 2 membrane-spanning stretches (helical) occupy residues 6–26 (IVFL…IAGV) and 29–49 (GIAK…LVIG).

It belongs to the UPF0391 family.

The protein resides in the cell membrane. In Saccharophagus degradans (strain 2-40 / ATCC 43961 / DSM 17024), this protein is UPF0391 membrane protein Sde_0270.